A 466-amino-acid polypeptide reads, in one-letter code: GTPase Der (466 aa).

EngA-type G domains follow at residues proline 30 to serine 193 and arginine 203 to aspartate 376. GTP-binding positions include glycine 36–serine 43, aspartate 83–tryptophan 87, asparagine 145–aspartate 148, glycine 209–serine 216, aspartate 256–leucine 260, and asparagine 321–aspartate 324. One can recognise a KH-like domain in the interval threonine 377–glutamate 459.

It belongs to the TRAFAC class TrmE-Era-EngA-EngB-Septin-like GTPase superfamily. EngA (Der) GTPase family. Associates with the 50S ribosomal subunit.

GTPase that plays an essential role in the late steps of ribosome biogenesis. This is GTPase Der from Mycobacterium avium (strain 104).